Reading from the N-terminus, the 84-residue chain is Toxin Tst1 (84 aa).

Residues 1–19 form the signal peptide; the sequence is MKGMILFISCLLLIDIVVG. One can recognise an LCN-type CS-alpha/beta domain in the interval 21–82; sequence KEGYLMDHEG…VWDRATNKCG (62 aa). Intrachain disulfides connect Cys31-Cys81, Cys35-Cys57, Cys43-Cys62, and Cys47-Cys64. Cysteine amide is present on Cys81.

As to expression, expressed by the venom gland.

The protein resides in the secreted. Functionally, beta toxins bind voltage-independently at site-4 of sodium channels (Nav) and shift the voltage of activation toward more negative potentials thereby affecting sodium channel activation and promoting spontaneous and repetitive firing. This toxin is active only on mammals. Is toxic to mice. The polypeptide is Toxin Tst1 (Tityus stigmurus (Brazilian scorpion)).